A 205-amino-acid chain; its full sequence is Translation initiation factor 2 subunit beta (205 aa).

A TRAM domain is found at 145–203; that stretch reads GIEIGKEYTVTIESTGSAGEGIARYQGYTIYVPKAKKGERVKIIIRKIKRNVAIAELAD.

The protein belongs to the eIF-2-beta/eIF-5 family. As to quaternary structure, heterotrimer composed of an alpha, a beta and a gamma chain.

In terms of biological role, eIF-2 functions in the early steps of protein synthesis by forming a ternary complex with GTP and initiator tRNA. This chain is Translation initiation factor 2 subunit beta, found in Picrophilus torridus (strain ATCC 700027 / DSM 9790 / JCM 10055 / NBRC 100828 / KAW 2/3).